Consider the following 441-residue polypeptide: Platelet-activating factor acetylhydrolase (441 aa).

Positions M1–P21 are cleaved as a signal peptide. The active-site Nucleophile is S273. Active-site charge relay system residues include D296 and H351. N423 and N433 each carry an N-linked (GlcNAc...) asparagine glycan.

This sequence belongs to the AB hydrolase superfamily. Lipase family. Post-translationally, N-glycosylated. Macrophage-derived PLA2G7 carries sialylated complex-type N-glycans that hinder its binding to HDL particles. As to expression, plasma. Secreted by macrophages (at protein level).

The protein resides in the secreted. It localises to the extracellular space. It catalyses the reaction a 1-O-alkyl-2-acetyl-sn-glycero-3-phosphocholine + H2O = a 1-O-alkyl-sn-glycero-3-phosphocholine + acetate + H(+). It carries out the reaction 1-O-decyl-2-acetyl-sn-glycero-3-phosphocholine + H2O = 1-O-decyl-sn-glycero-3-phosphocholine + acetate + H(+). The catalysed reaction is 1-O-dodecyl-2-acetyl-sn-glycero-3-phosphocholine + H2O = 1-O-dodecyl-sn-glycero-3-phosphocholine + acetate + H(+). The enzyme catalyses 1-O-tetradecyl-2-acetyl-sn-glycero-3-phosphocholine + H2O = 1-O-tetradecyl-sn-glycero-3-phosphocholine + acetate + H(+). It catalyses the reaction 1-O-hexadecyl-2-acetyl-sn-glycero-3-phosphocholine + H2O = 1-O-hexadecyl-sn-glycero-3-phosphocholine + acetate + H(+). It carries out the reaction 1-O-octadecyl-2-acetyl-sn-glycero-3-phosphocholine + H2O = 1-O-octadecyl-sn-glycero-3-phosphocholine + acetate + H(+). The catalysed reaction is 1-hexadecanoyl-2-acetyl-sn-glycero-3-phosphocholine + H2O = 1-hexadecanoyl-sn-glycero-3-phosphocholine + acetate + H(+). The enzyme catalyses 1-hexadecanoyl-2-propionyl-sn-glycero-3-phosphocholine + H2O = propanoate + 1-hexadecanoyl-sn-glycero-3-phosphocholine + H(+). It catalyses the reaction 1-hexadecanoyl-2-butanoyl-sn-glycero-3-phosphocholine + H2O = butanoate + 1-hexadecanoyl-sn-glycero-3-phosphocholine + H(+). It carries out the reaction 1-hexadecanoyl-2-pentanoyl-sn-glycero-3-phosphocholine + H2O = pentanoate + 1-hexadecanoyl-sn-glycero-3-phosphocholine + H(+). The catalysed reaction is 1-hexadecanoyl-2-glutaroyl-sn-glycero-3-phosphocholine + H2O = glutarate + 1-hexadecanoyl-sn-glycero-3-phosphocholine + H(+). The enzyme catalyses 1-hexadecanoyl-2-(5-oxopentanoyl)-sn-glycero-3-phosphocholine + H2O = 5-oxopentanoate + 1-hexadecanoyl-sn-glycero-3-phosphocholine + H(+). It catalyses the reaction 1-hexadecanoyl-2-(9-oxononanoyl)-sn-glycero-3-phosphocholine + H2O = 9-oxononanoate + 1-hexadecanoyl-sn-glycero-3-phosphocholine + H(+). It carries out the reaction 1-hexadecanoyl-2-[9-hydroperoxy-(10E-octadecenoyl)]-sn-glycero-3-phosphocholine + H2O = 9-hydroperoxy-10E-octadecenoate + 1-hexadecanoyl-sn-glycero-3-phosphocholine + H(+). The catalysed reaction is 1-hexadecanoyl-2-(10-hydroperoxy-8E-octadecenoyl)-sn-glycero-3-phosphocholine + H2O = 10-hydroperoxy-(8E)-octadecenoate + 1-hexadecanoyl-sn-glycero-3-phosphocholine + H(+). Its function is as follows. Lipoprotein-associated calcium-independent phospholipase A2 involved in phospholipid catabolism during inflammatory and oxidative stress response. At the lipid-aqueous interface, hydrolyzes the ester bond of fatty acyl group attached at sn-2 position of phospholipids (phospholipase A2 activity). Specifically targets phospholipids with a short-chain fatty acyl group at sn-2 position. Can hydrolyze phospholipids with long fatty acyl chains, only if they carry oxidized functional groups. Hydrolyzes and inactivates platelet-activating factor (PAF, 1-O-alkyl-2-acetyl-sn-glycero-3-phosphocholine), a potent pro-inflammatory signaling lipid that acts through PTAFR on various innate immune cells. Hydrolyzes oxidatively truncated phospholipids carrying an aldehyde group at omega position, preventing their accumulation in low-density lipoprotein (LDL) particles and uncontrolled pro-inflammatory effects. As part of high-density lipoprotein (HDL) particles, can hydrolyze phospholipids having long-chain fatty acyl hydroperoxides at sn-2 position and protect against potential accumulation of these oxylipins in the vascular wall. Catalyzes the release from membrane phospholipids of F2-isoprostanes, lipid biomarkers of cellular oxidative damage. This is Platelet-activating factor acetylhydrolase (PLA2G7) from Homo sapiens (Human).